Reading from the N-terminus, the 166-residue chain is Large ribosomal subunit protein uL10 (166 aa).

This sequence belongs to the universal ribosomal protein uL10 family. Part of the ribosomal stalk of the 50S ribosomal subunit. The N-terminus interacts with L11 and the large rRNA to form the base of the stalk. The C-terminus forms an elongated spine to which L12 dimers bind in a sequential fashion forming a multimeric L10(L12)X complex.

Its function is as follows. Forms part of the ribosomal stalk, playing a central role in the interaction of the ribosome with GTP-bound translation factors. The chain is Large ribosomal subunit protein uL10 from Streptococcus pneumoniae (strain ATCC 700669 / Spain 23F-1).